Here is a 451-residue protein sequence, read N- to C-terminus: Phosphoglucosamine mutase (451 aa).

The active-site Phosphoserine intermediate is S101. Residues S101, D240, D242, and D244 each coordinate Mg(2+). Position 101 is a phosphoserine (S101).

It belongs to the phosphohexose mutase family. Requires Mg(2+) as cofactor. In terms of processing, activated by phosphorylation.

The catalysed reaction is alpha-D-glucosamine 1-phosphate = D-glucosamine 6-phosphate. Functionally, catalyzes the conversion of glucosamine-6-phosphate to glucosamine-1-phosphate. This chain is Phosphoglucosamine mutase, found in Streptococcus pyogenes serotype M18 (strain MGAS8232).